The chain runs to 434 residues: GTPase Obg (434 aa).

In terms of domain architecture, Obg spans Ala-4–Leu-162. The region spanning Ala-163–Lys-333 is the OBG-type G domain. GTP is bound by residues Gly-169 to Ser-176, Phe-194 to Ile-198, Asp-215 to Gly-218, Asn-285 to Asp-288, and Ser-314 to Ile-316. Mg(2+) is bound by residues Ser-176 and Thr-196. One can recognise an OCT domain in the interval Leu-355–Glu-434.

It belongs to the TRAFAC class OBG-HflX-like GTPase superfamily. OBG GTPase family. In terms of assembly, monomer. It depends on Mg(2+) as a cofactor.

It localises to the cytoplasm. An essential GTPase which binds GTP, GDP and possibly (p)ppGpp with moderate affinity, with high nucleotide exchange rates and a fairly low GTP hydrolysis rate. Plays a role in control of the cell cycle, stress response, ribosome biogenesis and in those bacteria that undergo differentiation, in morphogenesis control. The polypeptide is GTPase Obg (Thermosipho africanus (strain TCF52B)).